The following is a 627-amino-acid chain: uncharacterized protein (627 aa).

Disordered regions lie at residues 141–187 (LRYP…TPPS) and 490–510 (ENEN…GPRT). A compositionally biased stretch (polar residues) spans 491–510 (NENTNGSANNSTYTNGGPRT). Ser559 bears the Phosphoserine mark.

This is an uncharacterized protein from Saccharomyces cerevisiae (strain ATCC 204508 / S288c) (Baker's yeast).